Reading from the N-terminus, the 427-residue chain is BSD domain-containing protein 1 (427 aa).

Serine 92 and serine 166 each carry phosphoserine. A BSD domain is found at 146-198 (WLSEFCLEEKKGEISELLVGSPSIRALYTKMVPAAVSHSEFWHRYFYKVHQLE). Residues 208-397 (KQRADQSISE…ISEDWEKDFD (190 aa)) form a disordered region. Residues 219-229 (PGWEEEEEELE) show a composition bias toward acidic residues. Over residues 236 to 245 (KEAKIPKETK) the composition is skewed to basic and acidic residues. Positions 268–279 (PAEATPSESSES) are enriched in low complexity. A compositionally biased stretch (pro residues) spans 324 to 333 (GPPPPPPSKP). Residues 347 to 364 (PPARVETLREEVPTDLRV) are compositionally biased toward basic and acidic residues. At threonine 353 the chain carries Phosphothreonine. Residues 368-387 (NSDSGKSTPSNNGKKGSSTD) show a composition bias toward polar residues. 2 positions are modified to phosphoserine: serine 384 and serine 385. The segment covering 388–397 (ISEDWEKDFD) has biased composition (acidic residues). A Phosphoserine modification is found at serine 415.

The sequence is that of BSD domain-containing protein 1 (Bsdc1) from Mus musculus (Mouse).